Reading from the N-terminus, the 134-residue chain is Kinetochore-binding protein 3 (134 aa).

The protein localises to the nucleus. Its subcellular location is the chromosome. The protein resides in the centromere. It localises to the kinetochore. The sequence is that of Kinetochore-binding protein 3 (kbp-3) from Caenorhabditis elegans.